The following is a 453-amino-acid chain: UDP-glycosyltransferase 79B6 (453 aa).

UDP-alpha-D-glucose is bound by residues serine 266, 325–327 (VQQ), 342–350 (HCGFGSMWE), and 364–367 (LGEQ).

The protein belongs to the UDP-glycosyltransferase family.

In Arabidopsis thaliana (Mouse-ear cress), this protein is UDP-glycosyltransferase 79B6 (UGT79B6).